Here is a 335-residue protein sequence, read N- to C-terminus: Beta-ketoacyl-[acyl-carrier-protein] synthase III (335 aa).

Catalysis depends on residues C119 and H261. An ACP-binding region spans residues 262 to 266; it reads QANQR. Residue N291 is part of the active site.

It belongs to the thiolase-like superfamily. FabH family. Homodimer.

It localises to the cytoplasm. It catalyses the reaction malonyl-[ACP] + acetyl-CoA + H(+) = 3-oxobutanoyl-[ACP] + CO2 + CoA. It participates in lipid metabolism; fatty acid biosynthesis. In terms of biological role, catalyzes the condensation reaction of fatty acid synthesis by the addition to an acyl acceptor of two carbons from malonyl-ACP. Catalyzes the first condensation reaction which initiates fatty acid synthesis and may therefore play a role in governing the total rate of fatty acid production. Possesses both acetoacetyl-ACP synthase and acetyl transacylase activities. Its substrate specificity determines the biosynthesis of branched-chain and/or straight-chain of fatty acids. The sequence is that of Beta-ketoacyl-[acyl-carrier-protein] synthase III from Prochlorococcus marinus (strain MIT 9515).